Reading from the N-terminus, the 704-residue chain is MATTSSNPLLLSSNFLGSQIIISAPTPKTTTKSLPFSVISRKRYQISQSEKLMKSLPSQAALAALLFSSSSPQALAVNEPVQPPAPTITAEAQSPNLSTFGQNVLMTAPNPQAQSSDLPDGTQWRYSEFLNAVKKGKVERVKFSKDGSVLQLTAVDNRRATVIVPNDPDLIDILAMNGVDISVSEGEGGNGLFDFIGNLLFPLLAFGGLFYLFRGGQGGAGGPGGLGGPMDFGRSKSKFQEVPETGVTFGDVAGADQAKLELQEVVDFLKNPDKYTALGAKIPKGCLLVGPPGTGKTLLARAVAGEAGVPFFSCAASEFVELFVGVGASRVRDLFEKAKSKAPCIVFIDEIDAVGRQRGAGMGGGNDEREQTINQLLTEMDGFSGNSGVIVLAATNRPDVLDSALLRPGRFDRQVTVDRPDVAGRVQILKVHSRGKAIGKDVDYEKVARRTPGFTGADLQNLMNEAAILAARRELKEISKDEISDALERIIAGPEKKNAVVSEEKKRLVAYHEAGHALVGALMPEYDPVAKISIIPRGQAGGLTFFAPSEERLESGLYSRSYLENQMAVALGGRVAEEVIFGDENVTTGASNDFMQVSRVARQMVERFGFSKKIGQVAVGGAGGNPFLGQSMSSQKDYSMATADVVDAEVRELVEKAYVRAKEIITTQIDILHKLAQLLIEKETVDGEEFMSLFIDGQAELYVS.

The transit peptide at methionine 1 to serine 58 directs the protein to the chloroplast. Residues glutamine 59 to alanine 76 constitute a thylakoid transit peptide. The chain crosses the membrane as a helical span at residues phenylalanine 193–phenylalanine 213. Glycine 290–threonine 297 is an ATP binding site. Residue histidine 512 participates in Zn(2+) binding. Glutamate 513 is an active-site residue. The Zn(2+) site is built by histidine 516 and aspartate 593.

It in the N-terminal section; belongs to the AAA ATPase family. In the C-terminal section; belongs to the peptidase M41 family. As to quaternary structure, heterohexamers with FTSH1, FTSH2 and FTSH8. Requires Zn(2+) as cofactor. Ubiquitous.

It localises to the plastid. Its subcellular location is the chloroplast thylakoid membrane. Functionally, part of a complex that function as an ATP-dependent zinc metallopeptidase. Involved in the thylakoid formation and in the removal of damaged D1 in the photosystem II, preventing cell death under high-intensity light conditions. Not involved in the degradation of the light-harvesting complex of photosystem II (LHC II) or in thermotolerance. The polypeptide is ATP-dependent zinc metalloprotease FTSH 5, chloroplastic (FTSH5) (Arabidopsis thaliana (Mouse-ear cress)).